Here is a 150-residue protein sequence, read N- to C-terminus: Endoribonuclease YbeY (150 aa).

The Zn(2+) site is built by His112, His116, and His122.

The protein belongs to the endoribonuclease YbeY family. Zn(2+) serves as cofactor.

It localises to the cytoplasm. In terms of biological role, single strand-specific metallo-endoribonuclease involved in late-stage 70S ribosome quality control and in maturation of the 3' terminus of the 16S rRNA. This chain is Endoribonuclease YbeY, found in Geobacter metallireducens (strain ATCC 53774 / DSM 7210 / GS-15).